Consider the following 832-residue polypeptide: Disintegrin and metalloproteinase domain-containing protein 23 (832 aa).

Residues 1 to 10 (MKPPGSSSRQ) are compositionally biased toward polar residues. Positions 1-37 (MKPPGSSSRQPPLAGCSLAGASCGPQRGPAGSVPASA) are disordered. The N-terminal stretch at 1 to 59 (MKPPGSSSRQPPLAGCSLAGASCGPQRGPAGSVPASAPARTPPCRLLLVLLLLPPLAAS) is a signal peptide. Over residues 28 to 37 (GPAGSVPASA) the composition is skewed to low complexity. A propeptide spanning residues 60-286 (SRPRAWGAAA…ELQWLKRRKR (227 aa)) is cleaved from the precursor. N-linked (GlcNAc...) asparagine glycosylation is found at asparagine 76, asparagine 96, asparagine 100, and asparagine 263. The Extracellular segment spans residues 287–792 (AVNPSRGIFE…EGPKGPSATN (506 aa)). Positions 299–496 (KYLELMIVND…GGGACLFNRP (198 aa)) constitute a Peptidase M12B domain. 3 cysteine pairs are disulfide-bonded: cysteine 408–cysteine 491, cysteine 450–cysteine 475, and cysteine 452–cysteine 459. Positions 502–588 (PTECGNGYVE…QCPPNLHKQD (87 aa)) constitute a Disintegrin domain. Residues asparagine 547 and asparagine 548 are each glycosylated (N-linked (GlcNAc...) asparagine). Residues cysteine 560 and cysteine 580 are joined by a disulfide bond. Residues 563-568 (AVNECD) are may bind the integrin receptor. Asparagine 664 and asparagine 732 each carry an N-linked (GlcNAc...) asparagine glycan. Residues 732 to 769 (NMSSCPLDSKGKVCSGHGVCSNEATCICDFTWAGTDCS) form the EGF-like domain. Cystine bridges form between cysteine 736/cysteine 751, cysteine 745/cysteine 757, and cysteine 759/cysteine 768. A helical transmembrane segment spans residues 793–813 (LIIGSIAGAILVAAIVLGGTG). The Cytoplasmic portion of the chain corresponds to 814-832 (WGFKNVKKRRFDPTQQGPI).

Can bind to LGI1 and LGI4. Ligand for integrin alpha-V/beta-3. In terms of tissue distribution, highly expressed in the brain and weakly expressed in the heart. In the brain, expressed prominently in the amygdala, caudate nucleus, hypothalamus, thalamus, cerebral cortex and occipital pole.

Its subcellular location is the cell membrane. It localises to the secreted. In terms of biological role, may play a role in cell-cell and cell-matrix interactions. This is a non-catalytic metalloprotease-like protein. The polypeptide is Disintegrin and metalloproteinase domain-containing protein 23 (ADAM23) (Homo sapiens (Human)).